The following is a 166-amino-acid chain: MGDPRKPRKKWSPPGHPWVKERLIEEMKLMGEYGLRNKREIWIAAAMLRRYRHRARELLALPAEVREKEEKALLKRLYDLGLVDENATLDDVLSLTVRDLLERRLQTVVYKKGLAKSIYHARQLVTHGHIAINGRRVTSPGYIVRRDEEELIGYAPTSPYFKKAQQ.

The region spanning 103-165 is the S4 RNA-binding domain; sequence RRLQTVVYKK…PTSPYFKKAQ (63 aa).

The protein belongs to the universal ribosomal protein uS4 family. In terms of assembly, part of the 30S ribosomal subunit. Contacts protein S5. The interaction surface between S4 and S5 is involved in control of translational fidelity.

Its function is as follows. One of the primary rRNA binding proteins, it binds directly to 16S rRNA where it nucleates assembly of the body of the 30S subunit. With S5 and S12 plays an important role in translational accuracy. The chain is Small ribosomal subunit protein uS4 from Ignicoccus hospitalis (strain KIN4/I / DSM 18386 / JCM 14125).